The chain runs to 230 residues: UPF0500 protein C1orf216 homolog (230 aa).

The disordered stretch occupies residues 1–103 (MFAAIQPGLA…AEPEKLSGAS (103 aa)). The span at 60–73 (RSSSESPSDNQVFQ) shows a compositional bias: polar residues. The span at 85–94 (PPEGAEIPGA) shows a compositional bias: low complexity.

Belongs to the UPF0500 family.

The chain is UPF0500 protein C1orf216 homolog from Mus musculus (Mouse).